The following is a 222-amino-acid chain: Superoxide dismutase [Mn], mitochondrial (222 aa).

Residues 1-24 (MLCRAACSTGRRLGPVAGAAGSRH) constitute a mitochondrion transit peptide. Histidine 50 contacts Mn(2+). Tyrosine 58 carries the post-translational modification 3'-nitrotyrosine. N6-acetyllysine; alternate is present on residues lysine 68 and lysine 75. Lysine 68 and lysine 75 each carry N6-succinyllysine; alternate. Histidine 98 contacts Mn(2+). Lysine 114 carries the post-translational modification N6-acetyllysine. Lysine 122 and lysine 130 each carry N6-acetyllysine; alternate. Residues lysine 122 and lysine 130 each carry the N6-succinyllysine; alternate modification. Mn(2+) contacts are provided by aspartate 183 and histidine 187. At lysine 202 the chain carries N6-acetyllysine.

It belongs to the iron/manganese superoxide dismutase family. In terms of assembly, homotetramer. It depends on Mn(2+) as a cofactor. In terms of processing, nitrated under oxidative stress. Nitration coupled with oxidation inhibits the catalytic activity. Post-translationally, acetylation at Lys-122 decreases enzymatic activity. Deacetylated by SIRT3 upon exposure to ionizing radiations or after long fasting. Polyubiquitinated; leading to proteasomal degradation. Deubiquitinated by USP36 which increases protein stability.

The protein resides in the mitochondrion matrix. The enzyme catalyses 2 superoxide + 2 H(+) = H2O2 + O2. In terms of biological role, destroys superoxide anion radicals which are normally produced within the cells and which are toxic to biological systems. In Mus musculus (Mouse), this protein is Superoxide dismutase [Mn], mitochondrial (Sod2).